The primary structure comprises 607 residues: Autophagy-related protein 16-1 (607 aa).

The interaction with ATG5 stretch occupies residues 13–43 (WKRHISEQLRRRDRLQRQAFEEIILQYNKLL). Positions 79-230 (DSQLQEMAQL…QKELAEAAKE (152 aa)) form a coiled coil. Residue S139 is modified to Phosphoserine. Positions 207–230 (AENEKDSRRRQARLQKELAEAAKE) are WIPI2-binding. Residues 230 to 242 (EPLPVEQDDDIEV) are RB1CC1-binding. Phosphoserine occurs at positions 269 and 287. The Caspase cleavage motif lies at 296–299 (DNVD). WD repeat units follow at residues 320–359 (AHDG…CEFK), 364–403 (GSNA…LRHT), 406–445 (GHSG…CIKT), 447–484 (FAGS…IVRE), 486–525 (ELLG…IKQT), 532–573 (KCGS…KVLS), and 575–607 (QHSS…WAQY).

This sequence belongs to the WD repeat ATG16 family. In terms of assembly, homodimer. Homooligomer. Heterooligomer with ATG16L2. Interacts with WIPI1. Interacts with WIPI2. Interacts with RB1CC1; the interaction is required for ULK1 complex-dependent autophagy. Interacts with ATG5. Part of the minor complex composed of 4 sets of ATG12-ATG5 and ATG16L1 (400 kDa); this complex interacts with ATG3 leading to disruption of ATG7 interaction and promotion of ATG8-like proteins lipidation. Part of the major complex composed of 8 sets of ATG12-ATG5 and ATG16L1 (800 kDa). Interacts with RAB33B (GTP- and GDP-bound forms); the complex consists of a tetramer where two RAB33B molecules bind independently one molecule of the ATG16L1 homodimer; the interaction promotes ATG12-ATG5-ATG16L1 complex recruitment to phagophores. Interacts (via WD repeats) with TMEM59; the interaction mediates unconventional autophagic activity of TMEM59. Interacts with TLR2. Interacts (via WD repeats) with MEFV. Interacts with PPP1CA; the interaction dephosphorylates ATG16L1 causing dissociation of ATG12-ATG5-ATG16L1 complex. Interacts (via N-terminal) with CLTC. Interacts with NOD1. Interacts with NOD2. Interacts with TUFM. Interacts with TRIM16. Interacts (via WD repeats) with SPATA33. Interacts with IRGM. Proteolytic cleavage by activated CASP3 leads to degradation and may regulate autophagy upon cellular stress and apoptotic stimuli. Post-translationally, phosphorylation at Ser-139 promotes association with the ATG12-ATG5 conjugate to form the ATG12-ATG5-ATG16L1 complex.

The protein localises to the cytoplasm. The protein resides in the preautophagosomal structure membrane. It is found in the endosome membrane. Its subcellular location is the lysosome membrane. Functionally, plays an essential role in both canonical and non-canonical autophagy: interacts with ATG12-ATG5 to mediate the lipidation to ATG8 family proteins (MAP1LC3A, MAP1LC3B, MAP1LC3C, GABARAPL1, GABARAPL2 and GABARAP). Acts as a molecular hub, coordinating autophagy pathways via distinct domains that support either canonical or non-canonical signaling. During canonical autophagy, interacts with ATG12-ATG5 to mediate the conjugation of phosphatidylethanolamine (PE) to ATG8 proteins, to produce a membrane-bound activated form of ATG8. Thereby, controls the elongation of the nascent autophagosomal membrane. As part of the ATG8 conjugation system with ATG5 and ATG12, required for recruitment of LRRK2 to stressed lysosomes and induction of LRRK2 kinase activity in response to lysosomal stress. Also involved in non-canonical autophagy, a parallel pathway involving conjugation of ATG8 proteins to single membranes at endolysosomal compartments, probably by catalyzing conjugation of phosphatidylserine (PS) to ATG8. Non-canonical autophagy plays a key role in epithelial cells to limit lethal infection by influenza A (IAV) virus. Regulates mitochondrial antiviral signaling (MAVS)-dependent type I interferon (IFN-I) production. Negatively regulates NOD1- and NOD2-driven inflammatory cytokine response. Instead, promotes an autophagy-dependent antibacterial pathway together with NOD1 or NOD2. Plays a role in regulating morphology and function of Paneth cell. This chain is Autophagy-related protein 16-1, found in Pongo abelii (Sumatran orangutan).